The sequence spans 196 residues: uncharacterized protein (196 aa).

The HTH tetR-type domain maps to 7-67 (RNTKEKILTA…AVIDNHVKIW (61 aa)). A DNA-binding region (H-T-H motif) is located at residues 30–49 (SINDILDETATGKGQFYYYF).

This is an uncharacterized protein from Lactococcus lactis subsp. lactis (Streptococcus lactis).